The chain runs to 120 residues: uncharacterized protein (120 aa).

The protein belongs to the asp23 family.

This is an uncharacterized protein from Bacillus subtilis (strain 168).